Reading from the N-terminus, the 125-residue chain is MSDKYIGDSHLEETGEEKQDSQEKEAVTPEKAEEQKLKAKYPNLGQKPGGSDFLMKRLQKGQKYFDSGDYNMAKAKIKNKQLPCAGPDKNLVTGDHIPTPQDLPQRKSSLVTSKLAGHVEDLHHV.

A compositionally biased stretch (basic and acidic residues) spans 1-37 (MSDKYIGDSHLEETGEEKQDSQEKEAVTPEKAEEQKL). Residues 1-52 (MSDKYIGDSHLEETGEEKQDSQEKEAVTPEKAEEQKLKAKYPNLGQKPGGSD) form a disordered region. Thr28 carries the post-translational modification Phosphothreonine; by CDK2. Ser67 is subject to Phosphoserine; by GWL. The interval 86–107 (GPDKNLVTGDHIPTPQDLPQRK) is disordered. Thr99 carries the phosphothreonine; by CDK2 modification. At Ser109 the chain carries Phosphoserine; by PKA.

Belongs to the endosulfine family. In terms of assembly, interacts (when phosphorylated at Ser-67) with ppp2r2d. Post-translationally, phosphorylation at Ser-67 by gwl during mitosis is essential for interaction with PPP2R2D (PR55-delta) and subsequent inactivation of PP2A. Phosphorylated by PKA.

The protein localises to the cytoplasm. In terms of biological role, protein phosphatase inhibitor that specifically inhibits protein phosphatase 2A (PP2A) during mitosis. When phosphorylated at Ser-67 during mitosis, specifically interacts with ppp2r2d (PR55-delta) and inhibits its activity, leading to inactivation of PP2A, an essential condition to keep cyclin-B1-CDK1 activity high during M phase. The sequence is that of Alpha-endosulfine (ensa) from Xenopus laevis (African clawed frog).